Here is a 757-residue protein sequence, read N- to C-terminus: 5-methyltetrahydropteroyltriglutamate--homocysteine methyltransferase (757 aa).

5-methyltetrahydropteroyltri-L-glutamate-binding positions include 16-19 and K112; that span reads RELK. L-homocysteine contacts are provided by residues 432-434 and E485; that span reads IGS. Residues 432-434 and E485 contribute to the L-methionine site; that span reads IGS. Residues 516–517 and W562 contribute to the 5-methyltetrahydropteroyltri-L-glutamate site; that span reads RC. Position 600 (D600) interacts with L-homocysteine. L-methionine is bound at residue D600. E606 contributes to the 5-methyltetrahydropteroyltri-L-glutamate binding site. H642, C644, and E666 together coordinate Zn(2+). Catalysis depends on H695, which acts as the Proton donor. C727 lines the Zn(2+) pocket.

This sequence belongs to the vitamin-B12 independent methionine synthase family. Zn(2+) is required as a cofactor.

The enzyme catalyses 5-methyltetrahydropteroyltri-L-glutamate + L-homocysteine = tetrahydropteroyltri-L-glutamate + L-methionine. It participates in amino-acid biosynthesis; L-methionine biosynthesis via de novo pathway; L-methionine from L-homocysteine (MetE route): step 1/1. Its function is as follows. Catalyzes the transfer of a methyl group from 5-methyltetrahydrofolate to homocysteine resulting in methionine formation. The chain is 5-methyltetrahydropteroyltriglutamate--homocysteine methyltransferase from Actinobacillus pleuropneumoniae serotype 5b (strain L20).